A 353-amino-acid chain; its full sequence is Histidinol-phosphate aminotransferase (353 aa).

Lysine 214 carries the N6-(pyridoxal phosphate)lysine modification.

Belongs to the class-II pyridoxal-phosphate-dependent aminotransferase family. Histidinol-phosphate aminotransferase subfamily. Homodimer. Requires pyridoxal 5'-phosphate as cofactor.

It catalyses the reaction L-histidinol phosphate + 2-oxoglutarate = 3-(imidazol-4-yl)-2-oxopropyl phosphate + L-glutamate. It participates in amino-acid biosynthesis; L-histidine biosynthesis; L-histidine from 5-phospho-alpha-D-ribose 1-diphosphate: step 7/9. This is Histidinol-phosphate aminotransferase from Gloeobacter violaceus (strain ATCC 29082 / PCC 7421).